A 225-amino-acid chain; its full sequence is PKHD-type hydroxylase YbiX (225 aa).

A Fe2OG dioxygenase domain is found at 78–177 (TLSTPLFNRY…RVASFMWIQS (100 aa)). The Fe cation site is built by histidine 96, aspartate 98, and histidine 158. Residue arginine 168 participates in 2-oxoglutarate binding.

Fe(2+) is required as a cofactor. L-ascorbate serves as cofactor.

The chain is PKHD-type hydroxylase YbiX from Escherichia coli O6:H1 (strain CFT073 / ATCC 700928 / UPEC).